Reading from the N-terminus, the 332-residue chain is Probable thc operon regulatory protein (332 aa).

The 102-residue stretch at 227-328 (RLAVDYLEAH…GVSPSEDLRT (102 aa)) folds into the HTH araC/xylS-type domain. 2 DNA-binding regions (H-T-H motif) span residues 244–265 (AQVA…QNSL) and 295–318 (VTEI…KQTF).

Functionally, probably involved in the positive regulation of the thc operon for the degradation of the thiocarbamate herbicide EPTC. This chain is Probable thc operon regulatory protein (thcR), found in Rhodococcus erythropolis (Arthrobacter picolinophilus).